Here is a 338-residue protein sequence, read N- to C-terminus: Ferredoxin--NADP reductase (338 aa).

7 residues coordinate FAD: Asp35, Gln43, Tyr48, Ala88, Phe122, Asp289, and Thr330.

It belongs to the ferredoxin--NADP reductase type 2 family. As to quaternary structure, homodimer. FAD is required as a cofactor.

It carries out the reaction 2 reduced [2Fe-2S]-[ferredoxin] + NADP(+) + H(+) = 2 oxidized [2Fe-2S]-[ferredoxin] + NADPH. This is Ferredoxin--NADP reductase from Ehrlichia chaffeensis (strain ATCC CRL-10679 / Arkansas).